We begin with the raw amino-acid sequence, 265 residues long: Adenosylcobinamide-GDP ribazoletransferase (265 aa).

A run of 5 helical transmembrane segments spans residues 59–79 (LSWI…SVLI), 113–133 (IGTF…LLLV), 141–161 (WIFL…ALLL), 183–203 (LPPF…VYFL), and 206–226 (FQNQ…FVFY).

The protein belongs to the CobS family. Requires Mg(2+) as cofactor.

Its subcellular location is the cell inner membrane. The enzyme catalyses alpha-ribazole + adenosylcob(III)inamide-GDP = adenosylcob(III)alamin + GMP + H(+). The catalysed reaction is alpha-ribazole 5'-phosphate + adenosylcob(III)inamide-GDP = adenosylcob(III)alamin 5'-phosphate + GMP + H(+). It functions in the pathway cofactor biosynthesis; adenosylcobalamin biosynthesis; adenosylcobalamin from cob(II)yrinate a,c-diamide: step 7/7. In terms of biological role, joins adenosylcobinamide-GDP and alpha-ribazole to generate adenosylcobalamin (Ado-cobalamin). Also synthesizes adenosylcobalamin 5'-phosphate from adenosylcobinamide-GDP and alpha-ribazole 5'-phosphate. This is Adenosylcobinamide-GDP ribazoletransferase from Leptospira interrogans serogroup Icterohaemorrhagiae serovar copenhageni (strain Fiocruz L1-130).